Here is a 74-residue protein sequence, read N- to C-terminus: Small ribosomal subunit protein bS18 (74 aa).

Belongs to the bacterial ribosomal protein bS18 family. In terms of assembly, part of the 30S ribosomal subunit. Forms a tight heterodimer with protein bS6.

Its function is as follows. Binds as a heterodimer with protein bS6 to the central domain of the 16S rRNA, where it helps stabilize the platform of the 30S subunit. This Alkalilimnicola ehrlichii (strain ATCC BAA-1101 / DSM 17681 / MLHE-1) protein is Small ribosomal subunit protein bS18.